Consider the following 299-residue polypeptide: HTH-type transcriptional regulator ArgP (299 aa).

Residues leucine 4 to threonine 60 enclose the HTH lysR-type domain. The segment at residues phenylalanine 21–lysine 40 is a DNA-binding region (H-T-H motif).

The protein belongs to the LysR transcriptional regulatory family. In terms of assembly, homodimer.

In terms of biological role, controls the transcription of genes involved in arginine and lysine metabolism. This chain is HTH-type transcriptional regulator ArgP, found in Aeromonas salmonicida.